The chain runs to 299 residues: Bifunctional protein FolD 1 (299 aa).

NADP(+) is bound by residues Gly-168–Ser-170, Ser-193, and Ile-234.

It belongs to the tetrahydrofolate dehydrogenase/cyclohydrolase family. As to quaternary structure, homodimer.

It catalyses the reaction (6R)-5,10-methylene-5,6,7,8-tetrahydrofolate + NADP(+) = (6R)-5,10-methenyltetrahydrofolate + NADPH. The catalysed reaction is (6R)-5,10-methenyltetrahydrofolate + H2O = (6R)-10-formyltetrahydrofolate + H(+). It functions in the pathway one-carbon metabolism; tetrahydrofolate interconversion. Functionally, catalyzes the oxidation of 5,10-methylenetetrahydrofolate to 5,10-methenyltetrahydrofolate and then the hydrolysis of 5,10-methenyltetrahydrofolate to 10-formyltetrahydrofolate. The polypeptide is Bifunctional protein FolD 1 (Mesorhizobium japonicum (strain LMG 29417 / CECT 9101 / MAFF 303099) (Mesorhizobium loti (strain MAFF 303099))).